The following is a 129-amino-acid chain: Small ribosomal subunit protein uS11 (129 aa).

This sequence belongs to the universal ribosomal protein uS11 family. In terms of assembly, part of the 30S ribosomal subunit.

Located on the platform of the 30S subunit. The protein is Small ribosomal subunit protein uS11 of Methanocaldococcus jannaschii (strain ATCC 43067 / DSM 2661 / JAL-1 / JCM 10045 / NBRC 100440) (Methanococcus jannaschii).